Here is a 557-residue protein sequence, read N- to C-terminus: Predicted GPI-anchored protein 17 (557 aa).

Positions 1–19 are cleaved as a signal peptide; the sequence is MKFSTVFTAIFALGTAVSA. N-linked (GlcNAc...) asparagine glycans are attached at residues Asn-62, Asn-116, Asn-284, and Asn-309. Positions 320–355 form a coiled coil; it reads LRKREYNDAVEAALRDIQKREEGIDDVEIALRKMKR. N-linked (GlcNAc...) asparagine glycans are attached at residues Asn-376, Asn-471, and Asn-520. Residue Asn-533 is the site of GPI-anchor amidated asparagine attachment. A propeptide spans 534–557 (removed in mature form); sequence AGSSYGPGFYSTIFAVFGLFAMMI.

Substrate for cleavage by KEX2 in vitro.

Its subcellular location is the cell membrane. Predicted GPI-anchored protein which may have a role during host infection. This is Predicted GPI-anchored protein 17 (PGA17) from Candida albicans (strain SC5314 / ATCC MYA-2876) (Yeast).